The sequence spans 117 residues: Fluoride-specific ion channel FluC 2 (117 aa).

4 consecutive transmembrane segments (helical) span residues 1 to 21 (MITILLVMLGGGIGAVLRALI), 33 to 53 (IPIATSIVNITGSLIIGFMMG), 61 to 81 (MFPFFVTGVLGGLTTFSTLSS), and 94 to 114 (IRFVVYSLLQFILGFIACFYG). The Na(+) site is built by Gly71 and Thr74.

The protein belongs to the fluoride channel Fluc/FEX (TC 1.A.43) family.

The protein resides in the cell membrane. The catalysed reaction is fluoride(in) = fluoride(out). Its activity is regulated as follows. Na(+) is not transported, but it plays an essential structural role and its presence is essential for fluoride channel function. Functionally, fluoride-specific ion channel. Important for reducing fluoride concentration in the cell, thus reducing its toxicity. The polypeptide is Fluoride-specific ion channel FluC 2 (Staphylococcus epidermidis (strain ATCC 35984 / DSM 28319 / BCRC 17069 / CCUG 31568 / BM 3577 / RP62A)).